The following is a 1120-amino-acid chain: Prophage side tail fiber protein homolog StfR (1120 aa).

Disordered stretches follow at residues 129-154, 221-442, and 960-1021; these read KSAS…SARA, SAST…ATRA, and SGRA…AGAH. Composition is skewed to low complexity over residues 221-239, 248-395, and 402-442; these read SAST…ARDA, SSET…SASA, and RQAS…ATRA. The segment covering 985–1021 has biased composition (polar residues); sequence DLGTKTTSSFDYGTKSTNNTGAHTHSVSGSTNSAGAH.

Belongs to the tail fiber family.

This chain is Prophage side tail fiber protein homolog StfR (stfR), found in Escherichia coli (strain K12).